We begin with the raw amino-acid sequence, 311 residues long: Olfactory receptor 8G1 (311 aa).

Topologically, residues 1 to 25 (MSGENNSSVTEFILAGLSEQPELQL) are extracellular. Residues Asn-5 and Asn-6 are each glycosylated (N-linked (GlcNAc...) asparagine). Residues 26-46 (PLFLLFLGIYVVTVVGNLGMT) traverse the membrane as a helical segment. Residues 47-54 (TLIWLSSH) are Cytoplasmic-facing. A helical membrane pass occupies residues 55–75 (LHTPMYYFLSSLSFIDFCHST). At 76–99 (VITPKMLVNFVTEKNIISYPECMT) the chain is on the extracellular side. An intrachain disulfide couples Cys-97 to Cys-189. The chain crosses the membrane as a helical span at residues 100–120 (QLYFFLVFAIAECHMLAAMAY). At 121-139 (DRYMAICSPLLYSVIISNK) the chain is on the cytoplasmic side. A helical transmembrane segment spans residues 140-160 (ACFSLILGVYIIGLVCASVHT). Topologically, residues 161 to 197 (GCMFRVQFCKFDLINHYFCDLLPLLKLSCSSIYVNKL) are extracellular. The chain crosses the membrane as a helical span at residues 198 to 217 (LILCVGAFNILVPSLTILCS). Topologically, residues 218 to 237 (YIFIIASILHIRSTEGRSKA) are cytoplasmic. A helical membrane pass occupies residues 238–258 (FSTCSSHMLAVVIFFGSAAFM). Residues 259 to 271 (YLQPSSISSMDQG) lie on the Extracellular side of the membrane. The helical transmembrane segment at 272–292 (KVSSVFYTIIVPMLNPLIYSL) threads the bilayer. Residues 293–311 (RNKDVHVSLKKMLQRRTLL) are Cytoplasmic-facing.

It belongs to the G-protein coupled receptor 1 family.

Its subcellular location is the cell membrane. Functionally, odorant receptor. The protein is Olfactory receptor 8G1 (OR8G1) of Homo sapiens (Human).